We begin with the raw amino-acid sequence, 309 residues long: Dihydroorotate dehydrogenase B (NAD(+)), catalytic subunit (309 aa).

FMN is bound by residues Ser21 and 45 to 46; that span reads KA. Substrate contacts are provided by residues Lys45 and 69–73; that span reads NAIGL. The FMN site is built by Asn99 and Asn127. Residue Asn127 participates in substrate binding. Cys130 serves as the catalytic Nucleophile. Positions 165 and 191 each coordinate FMN. 192–193 serves as a coordination point for substrate; the sequence is NT. FMN contacts are provided by residues Gly217, 243 to 244, and 265 to 266; these read GG and GT.

Belongs to the dihydroorotate dehydrogenase family. Type 1 subfamily. In terms of assembly, heterotetramer of 2 PyrK and 2 PyrD type B subunits. FMN is required as a cofactor.

It is found in the cytoplasm. The catalysed reaction is (S)-dihydroorotate + NAD(+) = orotate + NADH + H(+). It functions in the pathway pyrimidine metabolism; UMP biosynthesis via de novo pathway; orotate from (S)-dihydroorotate (NAD(+) route): step 1/1. Its function is as follows. Catalyzes the conversion of dihydroorotate to orotate with NAD(+) as electron acceptor. This chain is Dihydroorotate dehydrogenase B (NAD(+)), catalytic subunit (pyrD), found in Bacillus thuringiensis (strain Al Hakam).